Reading from the N-terminus, the 205-residue chain is Large ribosomal subunit protein uL10 (205 aa).

A disordered region spans residues 167–205 (AQGAAPAEAKAEAPASEEKAADTPAEQPAESAPEAAPEA). 2 stretches are compositionally biased toward low complexity: residues 169–180 (GAAPAEAKAEAP) and 190–205 (PAEQ…APEA).

It belongs to the universal ribosomal protein uL10 family. Part of the ribosomal stalk of the 50S ribosomal subunit. The N-terminus interacts with L11 and the large rRNA to form the base of the stalk. The C-terminus forms an elongated spine to which L12 dimers bind in a sequential fashion forming a multimeric L10(L12)X complex.

In terms of biological role, forms part of the ribosomal stalk, playing a central role in the interaction of the ribosome with GTP-bound translation factors. The sequence is that of Large ribosomal subunit protein uL10 from Treponema denticola (strain ATCC 35405 / DSM 14222 / CIP 103919 / JCM 8153 / KCTC 15104).